A 505-amino-acid chain; its full sequence is Trans-cinnamate 4-monooxygenase (505 aa).

Residues 3–23 traverse the membrane as a helical segment; sequence LLLLEKTLLALFIAATIAITI. Residues 212 to 217 and alanine 305 each bind (E)-cinnamate; that span reads RSRLAQ. Cysteine 446 is a binding site for heme.

The protein belongs to the cytochrome P450 family. Heme is required as a cofactor.

The protein resides in the membrane. The enzyme catalyses (E)-cinnamate + reduced [NADPH--hemoprotein reductase] + O2 = (E)-4-coumarate + oxidized [NADPH--hemoprotein reductase] + H2O + H(+). Its pathway is phenylpropanoid metabolism; trans-4-coumarate biosynthesis; trans-4-coumarate from trans-cinnamate: step 1/1. Catalyzes the first oxidative step of the phenylpropanoid pathway in higher plants by transforming trans-cinnamate into p-coumarate. The compounds formed by this pathway are essential components for lignification, pollination, and defense against ultraviolet light, predators and pathogens. The polypeptide is Trans-cinnamate 4-monooxygenase (CYP73A19) (Cicer arietinum (Chickpea)).